We begin with the raw amino-acid sequence, 351 residues long: Glycerol-3-phosphate dehydrogenase [NAD(P)+] (351 aa).

NADPH-binding residues include Ser-18, Trp-19, Arg-38, and Lys-122. 3 residues coordinate sn-glycerol 3-phosphate: Lys-122, Gly-153, and Ser-155. NADPH is bound at residue Ala-157. 5 residues coordinate sn-glycerol 3-phosphate: Lys-208, Asp-261, Ser-271, Arg-272, and Asn-273. Lys-208 serves as the catalytic Proton acceptor. Residue Arg-272 participates in NADPH binding. Glu-297 contributes to the NADPH binding site.

Belongs to the NAD-dependent glycerol-3-phosphate dehydrogenase family.

The protein localises to the cytoplasm. It catalyses the reaction sn-glycerol 3-phosphate + NAD(+) = dihydroxyacetone phosphate + NADH + H(+). The enzyme catalyses sn-glycerol 3-phosphate + NADP(+) = dihydroxyacetone phosphate + NADPH + H(+). It functions in the pathway membrane lipid metabolism; glycerophospholipid metabolism. In terms of biological role, catalyzes the reduction of the glycolytic intermediate dihydroxyacetone phosphate (DHAP) to sn-glycerol 3-phosphate (G3P), the key precursor for phospholipid synthesis. In Bordetella pertussis (strain Tohama I / ATCC BAA-589 / NCTC 13251), this protein is Glycerol-3-phosphate dehydrogenase [NAD(P)+].